Here is a 448-residue protein sequence, read N- to C-terminus: Glucose-6-phosphate isomerase (448 aa).

Catalysis depends on Glu290, which acts as the Proton donor. Active-site residues include His311 and Lys425.

Belongs to the GPI family.

It localises to the cytoplasm. The catalysed reaction is alpha-D-glucose 6-phosphate = beta-D-fructose 6-phosphate. The protein operates within carbohydrate biosynthesis; gluconeogenesis. Its pathway is carbohydrate degradation; glycolysis; D-glyceraldehyde 3-phosphate and glycerone phosphate from D-glucose: step 2/4. In terms of biological role, catalyzes the reversible isomerization of glucose-6-phosphate to fructose-6-phosphate. The chain is Glucose-6-phosphate isomerase from Latilactobacillus sakei subsp. sakei (strain 23K) (Lactobacillus sakei subsp. sakei).